We begin with the raw amino-acid sequence, 438 residues long: GTPase Der (438 aa).

EngA-type G domains follow at residues 4–168 (PVVA…PAGA) and 176–351 (VRIA…GEYR). Residues 10-17 (GRPNVGKS), 57-61 (DTGGI), 120-123 (NKVD), 182-189 (GRPNVGKS), 229-233 (DTAGM), and 294-297 (NKWD) contribute to the GTP site. One can recognise a KH-like domain in the interval 352 to 436 (RQIPTSMLNR…PVRILFRRRE (85 aa)).

The protein belongs to the TRAFAC class TrmE-Era-EngA-EngB-Septin-like GTPase superfamily. EngA (Der) GTPase family. As to quaternary structure, associates with the 50S ribosomal subunit.

Functionally, GTPase that plays an essential role in the late steps of ribosome biogenesis. The protein is GTPase Der of Desulforudis audaxviator (strain MP104C).